Consider the following 212-residue polypeptide: Urease accessory protein UreG 2 (212 aa).

11-18 is a binding site for GTP; the sequence is GPVGSGKT.

Belongs to the SIMIBI class G3E GTPase family. UreG subfamily. Homodimer. UreD, UreF and UreG form a complex that acts as a GTP-hydrolysis-dependent molecular chaperone, activating the urease apoprotein by helping to assemble the nickel containing metallocenter of UreC. The UreE protein probably delivers the nickel.

The protein localises to the cytoplasm. In terms of biological role, facilitates the functional incorporation of the urease nickel metallocenter. This process requires GTP hydrolysis, probably effectuated by UreG. This is Urease accessory protein UreG 2 from Brucella abortus (strain 2308).